The chain runs to 327 residues: Methionyl-tRNA formyltransferase (327 aa).

(6S)-5,6,7,8-tetrahydrofolate is bound at residue 122-125 (SLLP).

The protein belongs to the Fmt family.

The catalysed reaction is L-methionyl-tRNA(fMet) + (6R)-10-formyltetrahydrofolate = N-formyl-L-methionyl-tRNA(fMet) + (6S)-5,6,7,8-tetrahydrofolate + H(+). Functionally, attaches a formyl group to the free amino group of methionyl-tRNA(fMet). The formyl group appears to play a dual role in the initiator identity of N-formylmethionyl-tRNA by promoting its recognition by IF2 and preventing the misappropriation of this tRNA by the elongation apparatus. The chain is Methionyl-tRNA formyltransferase from Ralstonia nicotianae (strain ATCC BAA-1114 / GMI1000) (Ralstonia solanacearum).